Here is a 308-residue protein sequence, read N- to C-terminus: Transcriptional adapter 1-2 (308 aa).

This sequence belongs to the TADA1 family. In terms of assembly, component of the Spt-Ada-Gcn5 acetyltransferase (SAGA) complex consisting of wda/Taf5L, Saf6, Taf9, Taf10b, Taf12, Ada1, Spt3, Spt7, Spt20, Sf3b3, Sf3b5, Nipped-A/Tra1, a histone acetyltransferase (HAT) module made up of Gcn5, Ada2b (Isoform B), Ada3 and Sgf29, and a deubiquitinase (DUB) module made up of not/nonstop, Sgf11 and e(y)2 tethered to SAGA by Atxn7. Not a component of the Ada2a-containing ATAC complex.

It is found in the nucleus. Its function is as follows. Component of the transcription regulatory complex SAGA, a multiprotein complex that activates transcription by remodeling chromatin and mediating histone acetylation and deubiquitination. The SAGA complex predominantly acetylates histone H3. The protein is Transcriptional adapter 1-2 of Drosophila melanogaster (Fruit fly).